We begin with the raw amino-acid sequence, 197 residues long: Pyridoxal 5'-phosphate synthase subunit PdxT (197 aa).

Position 53 to 55 (53 to 55) interacts with L-glutamine; that stretch reads GES. Cys-85 functions as the Nucleophile in the catalytic mechanism. L-glutamine contacts are provided by residues Arg-114 and 142 to 143; that span reads IR. Residues His-179 and Glu-181 each act as charge relay system in the active site.

The protein belongs to the glutaminase PdxT/SNO family. As to quaternary structure, in the presence of PdxS, forms a dodecamer of heterodimers. Only shows activity in the heterodimer.

It catalyses the reaction aldehydo-D-ribose 5-phosphate + D-glyceraldehyde 3-phosphate + L-glutamine = pyridoxal 5'-phosphate + L-glutamate + phosphate + 3 H2O + H(+). The catalysed reaction is L-glutamine + H2O = L-glutamate + NH4(+). Its pathway is cofactor biosynthesis; pyridoxal 5'-phosphate biosynthesis. In terms of biological role, catalyzes the hydrolysis of glutamine to glutamate and ammonia as part of the biosynthesis of pyridoxal 5'-phosphate. The resulting ammonia molecule is channeled to the active site of PdxS. The polypeptide is Pyridoxal 5'-phosphate synthase subunit PdxT (Thermococcus kodakarensis (strain ATCC BAA-918 / JCM 12380 / KOD1) (Pyrococcus kodakaraensis (strain KOD1))).